The chain runs to 344 residues: Succinylglutamate desuccinylase (344 aa).

His63, Glu66, and His160 together coordinate Zn(2+). Glu224 is an active-site residue.

This sequence belongs to the AspA/AstE family. Succinylglutamate desuccinylase subfamily. Zn(2+) serves as cofactor.

It carries out the reaction N-succinyl-L-glutamate + H2O = L-glutamate + succinate. It functions in the pathway amino-acid degradation; L-arginine degradation via AST pathway; L-glutamate and succinate from L-arginine: step 5/5. In terms of biological role, transforms N(2)-succinylglutamate into succinate and glutamate. The chain is Succinylglutamate desuccinylase from Shewanella sp. (strain MR-7).